The primary structure comprises 206 residues: Large ribosomal subunit protein mL62 (206 aa).

The N-terminal 29 residues, 1 to 29, are a transit peptide targeting the mitochondrion; sequence MATAWCLPWTLRRAGAWLLTPPLRCPRRA.

It belongs to the prokaryotic/mitochondrial release factor family. Mitochondrion-specific ribosomal protein mL62 subfamily. As to quaternary structure, component of the mitochondrial 39S ribosomal subunit.

The protein resides in the mitochondrion. The catalysed reaction is an N-acyl-L-alpha-aminoacyl-tRNA + H2O = an N-acyl-L-amino acid + a tRNA + H(+). Essential peptidyl-tRNA hydrolase component of the mitochondrial large ribosomal subunit. Acts as a codon-independent translation release factor that has lost all stop codon specificity and directs the termination of translation in mitochondrion, possibly in case of abortive elongation. May be involved in the hydrolysis of peptidyl-tRNAs that have been prematurely terminated and thus in the recycling of stalled mitochondrial ribosomes. This chain is Large ribosomal subunit protein mL62, found in Ailuropoda melanoleuca (Giant panda).